Here is a 300-residue protein sequence, read N- to C-terminus: Protoheme IX farnesyltransferase (300 aa).

9 helical membrane-spanning segments follow: residues 20 to 40, 49 to 69, 97 to 117, 122 to 142, 145 to 165, 176 to 196, 217 to 237, 242 to 262, and 278 to 298; these read ITKAGLAISVLFSSIAGYLLG, WSVLIVLAIGGYCMVGASNAY, VTALIVASLLTIIGIVLLYTI, AMFAAISIFLYTSIYTPLKTV, LSVFVGAFPGAIPFMLGWVAA, LFLIQFFWQFPHFWSIGWFLY, ALQVILYTIWLIIASLLPVLG, LFISPVAAVLVFLLGLWMLFY, and LMLVSVSYISLLQIVFIVDKF.

This sequence belongs to the UbiA prenyltransferase family. Protoheme IX farnesyltransferase subfamily.

Its subcellular location is the cell inner membrane. The catalysed reaction is heme b + (2E,6E)-farnesyl diphosphate + H2O = Fe(II)-heme o + diphosphate. The protein operates within porphyrin-containing compound metabolism; heme O biosynthesis; heme O from protoheme: step 1/1. Functionally, converts heme B (protoheme IX) to heme O by substitution of the vinyl group on carbon 2 of heme B porphyrin ring with a hydroxyethyl farnesyl side group. The polypeptide is Protoheme IX farnesyltransferase (Flavobacterium johnsoniae (strain ATCC 17061 / DSM 2064 / JCM 8514 / BCRC 14874 / CCUG 350202 / NBRC 14942 / NCIMB 11054 / UW101) (Cytophaga johnsonae)).